We begin with the raw amino-acid sequence, 438 residues long: RING finger protein 150 (438 aa).

An N-terminal signal peptide occupies residues 1-34; that stretch reads MAMSLIQACCSLALSTWLLSFCFVHLLCLDFTVA. At 35-208 the chain is on the extracellular side; the sequence is EKEEWYTAFV…NLQKYVSRTS (174 aa). 4 N-linked (GlcNAc...) asparagine glycosylation sites follow: N45, N125, N153, and N186. In terms of domain architecture, PA spans 81 to 183; that stretch reads SPKQDARGEV…PKGKEIVSLL (103 aa). A helical membrane pass occupies residues 209 to 229; sequence VVFVSISFIVLMIISLAWLVF. Topologically, residues 230–438 are cytoplasmic; sequence YYIQRFRYAN…TDQDCEEVKS (209 aa). The RING-type; atypical zinc finger occupies 278–319; the sequence is CAVCIEGYKPNDVVRILPCRHLFHKSCVDPWLLDHRTCPMCK.

The protein resides in the membrane. This chain is RING finger protein 150 (RNF150), found in Homo sapiens (Human).